Reading from the N-terminus, the 144-residue chain is Translation initiation factor 5A (144 aa).

A Hypusine modification is found at Lys38.

Belongs to the eIF-5A family.

It localises to the cytoplasm. Its function is as follows. Functions by promoting the formation of the first peptide bond. The sequence is that of Translation initiation factor 5A from Nanoarchaeum equitans (strain Kin4-M).